Reading from the N-terminus, the 98-residue chain is NADH-ubiquinone oxidoreductase chain 4L (98 aa).

The next 3 helical transmembrane spans lie at 1–21 (MSMVYINIFLAFTLSFMGLLI), 29–49 (SLLCLEGMMLSLFVLMTVTIL), and 61–81 (IILLVFAACEAALGLSLLVMV).

It belongs to the complex I subunit 4L family. As to quaternary structure, core subunit of respiratory chain NADH dehydrogenase (Complex I) which is composed of 45 different subunits.

It localises to the mitochondrion inner membrane. The enzyme catalyses a ubiquinone + NADH + 5 H(+)(in) = a ubiquinol + NAD(+) + 4 H(+)(out). In terms of biological role, core subunit of the mitochondrial membrane respiratory chain NADH dehydrogenase (Complex I) which catalyzes electron transfer from NADH through the respiratory chain, using ubiquinone as an electron acceptor. Part of the enzyme membrane arm which is embedded in the lipid bilayer and involved in proton translocation. The protein is NADH-ubiquinone oxidoreductase chain 4L (MT-ND4L) of Taxidea taxus (American badger).